A 391-amino-acid polypeptide reads, in one-letter code: Multidrug resistance protein MdtL (391 aa).

12 consecutive transmembrane segments (helical) span residues 4-24 (FLIC…MYLV), 42-62 (IAFS…GKVA), 69-89 (PVAI…SLAE), 93-113 (LFLA…VVAF), 131-151 (LLNG…HLIM), 158-178 (SLFW…LFIL), 203-222 (FFLS…LTFV), 245-265 (ALTA…LGIF), 269-289 (TLMI…AVSP), 293-313 (VSLF…GVAM), 331-351 (LGIA…VVGI), and 356-376 (MLIG…MFVA).

This sequence belongs to the major facilitator superfamily. DHA1 family. MdtL (TC 2.A.1.2.22) subfamily.

It localises to the cell inner membrane. Its function is as follows. Confers resistance to chloramphenicol. In Escherichia coli (strain SMS-3-5 / SECEC), this protein is Multidrug resistance protein MdtL.